Consider the following 198-residue polypeptide: MSSSGPPAGDGRDDASGPGPAGAAAAADGSVPVSRSIVERWKMEPAAARARLLLRAVAWLFSLLALVVMASNKHGHGGAQDFDNYPEYTYCLGISIIAVLYTTAQVTRDVHRLSWGRDVIAGRKAAAVVDFAGDQVVAYLLMSALSAAAPVTDYMRQAADNLFTDSAAAAISMAFLAFLAAGLSALVSGYNLAMEVLV.

The tract at residues 1–27 is disordered; the sequence is MSSSGPPAGDGRDDASGPGPAGAAAAA. Residues 1–51 lie on the Cytoplasmic side of the membrane; sequence MSSSGPPAGDGRDDASGPGPAGAAAAADGSVPVSRSIVERWKMEPAAARAR. Positions 16–27 are enriched in low complexity; it reads SGPGPAGAAAAA. The helical transmembrane segment at 52–72 threads the bilayer; that stretch reads LLLRAVAWLFSLLALVVMASN. At 73–85 the chain is on the extracellular side; it reads KHGHGGAQDFDNY. A helical membrane pass occupies residues 86-106; sequence PEYTYCLGISIIAVLYTTAQV. Over 107 to 124 the chain is Cytoplasmic; the sequence is TRDVHRLSWGRDVIAGRK. A helical transmembrane segment spans residues 125–145; the sequence is AAAVVDFAGDQVVAYLLMSAL. The Extracellular segment spans residues 146-166; sequence SAAAPVTDYMRQAADNLFTDS. The chain crosses the membrane as a helical span at residues 167 to 187; the sequence is AAAAISMAFLAFLAAGLSALV. Residues 188 to 198 lie on the Cytoplasmic side of the membrane; sequence SGYNLAMEVLV.

The protein belongs to the Casparian strip membrane proteins (CASP) family. In terms of assembly, homodimer and heterodimers.

It is found in the cell membrane. This Oryza sativa subsp. japonica (Rice) protein is CASP-like protein 4B3.